The sequence spans 334 residues: H-2 class I histocompatibility antigen, Q7 alpha chain (334 aa).

An N-terminal signal peptide occupies residues 1–21 (MALTMLLLLVAAALTLIETRA). Residues 22–111 (GQHSLQYFHT…AQSYYNQSKG (90 aa)) form an alpha-1 region. At 22 to 310 (GQHSLQYFHT…PPYTVSNMAT (289 aa)) the chain is on the extracellular side. The N-linked (GlcNAc...) asparagine glycan is linked to N107. The tract at residues 112 to 203 (GSHTLQWMYG…QLGKETLLRT (92 aa)) is alpha-2. 2 cysteine pairs are disulfide-bonded: C122–C185 and C224–C280. The alpha-3 stretch occupies residues 204–295 (DPPKAHVTHH…GLPEPLTLRW (92 aa)). An Ig-like C1-type domain is found at 206–294 (PKAHVTHHPR…EGLPEPLTLR (89 aa)). N277 is a glycosylation site (N-linked (GlcNAc...) asparagine). The interval 296–310 (GRWEPPPYTVSNMAT) is connecting peptide. A helical membrane pass occupies residues 311-332 (IAVVVDLGAVAIIGAVVAFVMN).

It belongs to the MHC class I family. Heterodimer of an alpha chain and a beta chain (beta-2-microglobulin).

Its subcellular location is the membrane. In terms of biological role, involved in the presentation of foreign antigens to the immune system. In Mus musculus (Mouse), this protein is H-2 class I histocompatibility antigen, Q7 alpha chain (H2-Q7).